A 270-amino-acid polypeptide reads, in one-letter code: Regulatory protein RecX (270 aa).

This sequence belongs to the RecX family.

It is found in the cytoplasm. Its function is as follows. Modulates RecA activity. In Bacillus anthracis (strain A0248), this protein is Regulatory protein RecX.